The chain runs to 573 residues: MASQGPLYIGFDLSTQQLKGLVVNSELKVVHISKFDFDADSRGFSIKKGVLTNEAEHEVFAPVALWLQALDGVLDGLRKQGLDFSRVRGISGAGQQHGSVYWGENAEKLLGGLDAGKTLEEQLSGAFSHPFSPNWQDASTQKECDEFDAVLGGPEQLAEATGSKAHHRFTGPQILRFQRKYPEVYKKTSRISLVSSFLASLLLGHIAPMDISDVCGMNLWNIRKGAYDEDLLKLCAGPFGMEDLKRKLGDVPEDGGLHLGKINKYYIDRYGFSSDCEILPSTGDNPATILALPLRPSDAMVSLGTSTTFLMSTPSYKPDPATHFFNHPTTPGLYMFMLCYKNGGLAREHVRDAINEKLGSPASQSWENFDRITLETPPLGQKSESDPMKLGLFFPRPEIVPNLRSGQWRFNYNPANETLTESNDGWNNPSDEARAIVESQMLSLRLRSRGLTQSPGAKIPPQPRRVYLVGGGSKNKAIAKVAGEILGGSDGVYKLDVGDNACALGAAYKAVWAMERTPGQTFEDLIGQRWREEEFIEKIADGYQKGVFEKYGNAVEGFEKMEHQVLEQEAARK.

Substrate-binding residues include His-97, Arg-168, Asp-284, and Asn-285. ATP is bound by residues Trp-366, 471-472 (GG), and Asn-475.

This sequence belongs to the FGGY kinase family.

Its subcellular location is the cytoplasm. It catalyses the reaction D-xylulose + ATP = D-xylulose 5-phosphate + ADP + H(+). Highly specific D-xylulose kinase which participates in the catabolism of xylose. Xylose is a major component of hemicelluloses such as xylan. Most fungi utilize D-xylose via three enzymatic reactions, xylose reductase (XR), xylitol dehydrogenase (XDH), and xylulokinase, to form xylulose 5-phosphate, which enters pentose phosphate pathway. This is Probable D-xylulose kinase A (xkiA) from Aspergillus clavatus (strain ATCC 1007 / CBS 513.65 / DSM 816 / NCTC 3887 / NRRL 1 / QM 1276 / 107).